The sequence spans 188 residues: Photosystem I assembly protein Ycf4 (188 aa).

Helical transmembrane passes span 26 to 48 and 68 to 90; these read MLWA…SSYF and AALT…VFFL.

The protein belongs to the Ycf4 family.

Its subcellular location is the cellular thylakoid membrane. Seems to be required for the assembly of the photosystem I complex. This is Photosystem I assembly protein Ycf4 from Picosynechococcus sp. (strain ATCC 27264 / PCC 7002 / PR-6) (Agmenellum quadruplicatum).